The following is a 463-amino-acid chain: Argininosuccinate lyase (463 aa).

This sequence belongs to the lyase 1 family. Argininosuccinate lyase subfamily.

The protein resides in the cytoplasm. The enzyme catalyses 2-(N(omega)-L-arginino)succinate = fumarate + L-arginine. It functions in the pathway amino-acid biosynthesis; L-arginine biosynthesis; L-arginine from L-ornithine and carbamoyl phosphate: step 3/3. This chain is Argininosuccinate lyase, found in Bacillus cereus (strain AH187).